The sequence spans 745 residues: Junction plakoglobin (745 aa).

Met-1 carries the post-translational modification N-acetylmethionine. A glycan (O-linked (GlcNAc) threonine) is linked at Thr-14. Residues Ser-99 and Ser-125 each carry the phosphoserine modification. ARM repeat units follow at residues 132-171 (NYQDDAELATRALPELTKLLNDEDPVVVTKAAMIVNQLSK), 172-215 (KEAS…LSHH), 216-255 (REGLLAIFKSGGIPALVRMLSSPVESVLFYAITTLHNLLL), 258-297 (EGAKMAVRLADGLQKMVPLLNKNNPKFLAITTDCLQLLAY), 298-341 (GNQE…LSVC), 342-381 (PSNKPAIVEAGGMQALGKHLTSNSPRLVQNCLWTLRNLSD), 383-420 (ATKQEGLESVLKILVNQLSVDDVNVLTCATGTLSNLTC), 423-464 (SKNK…HLTS), 470-510 (EMAQ…NLAL), 512-551 (PANHAPLQEAAVIPRLVQLLVKAHQDAQRHVAAGTQQPYT), 574-613 (PMNRMEIFRLNTIPLFVQLLYSSVENIQRVAAGVLCELAQ), and 615-661 (KEAA…PDYR). An interaction with DSC1 and DSG1 region spans residues 132–297 (NYQDDAELAT…TTDCLQLLAY (166 aa)). Phosphoserine is present on Ser-182. Positions 574 to 661 (PMNRMEIFRL…ISEDKNPDYR (88 aa)) are interaction with DSC1. 2 positions are modified to phosphoserine: Ser-665 and Ser-730.

Belongs to the beta-catenin family. Homodimer. Component of an E-cadherin/catenin adhesion complex composed of at least E-cadherin/CDH1 and gamma-catenin/JUP, and possibly alpha-catenin/CTNNA1; the complex is located to adherens junctions. The stable association of CTNNA1 is controversial as CTNNA1 was shown not to bind to F-actin when assembled in the complex. Interacts with MUC1. Interacts with CAV1. Interacts with PTPRJ. Interacts with DSG1. Interacts with DSC1 and DSC2. Interacts with PKP2. Interacts with PKP3 (via N-terminus); the interaction is required for PKP3 localization to desmosome cell-cell junctions. Interacts with DSG4. In terms of processing, may be phosphorylated by FER. As to expression, expressed in the heart (at protein level).

Its subcellular location is the cell junction. The protein resides in the adherens junction. It localises to the desmosome. The protein localises to the cytoplasm. It is found in the cytoskeleton. Its subcellular location is the cell membrane. The protein resides in the nucleus. In terms of biological role, common junctional plaque protein. The membrane-associated plaques are architectural elements in an important strategic position to influence the arrangement and function of both the cytoskeleton and the cells within the tissue. The presence of plakoglobin in both the desmosomes and in the intermediate junctions suggests that it plays a central role in the structure and function of submembranous plaques. Acts as a substrate for VE-PTP and is required by it to stimulate VE-cadherin function in endothelial cells. Can replace beta-catenin in E-cadherin/catenin adhesion complexes which are proposed to couple cadherins to the actin cytoskeleton. The sequence is that of Junction plakoglobin from Homo sapiens (Human).